We begin with the raw amino-acid sequence, 431 residues long: MGKTIAQKIFDAHSVDQPFGEVHVIRLDGVFCHEITTPTAICDLMEKNKDRVFDPSKIKAVIDHVTPAKDSKTAAQGKILRQWARRHGIDGFFDIGRNGVCHALFPEQGFVRPGHTIIMGDSHTCTYGAFGAFAAGVGTTDLEVGILKGVCALNYPSTIKVVLNGKLSPGVYAKDVILAVIAELGVNGATNRVIEFTGPCVDAMSMEARMTLCNMAIEAGGTCGICYPDKTTVAYLWEFIKGEYPSRQAALKAFKKLVSDPDADYDRVLEMDISDLSPRVTYGYKPDCVKPVAEMEGTPIDQVYIGSCTNGRLEDLRVAAKVLKGKKVHPSVRGIVSPATPTVFQAALEEGLIATFMAAGFCVTNPTCGACLGMSNGVLAPGEVCLSTTNRNFNGRMGKGGMVHLASPATAAAGAIAGCITNSKLYKKRAE.

3 residues coordinate [4Fe-4S] cluster: C308, C368, and C371.

It belongs to the aconitase/IPM isomerase family. LeuC type 2 subfamily. Heterodimer of LeuC and LeuD. Requires [4Fe-4S] cluster as cofactor.

It catalyses the reaction (2R,3S)-3-isopropylmalate = (2S)-2-isopropylmalate. The protein operates within amino-acid biosynthesis; L-leucine biosynthesis; L-leucine from 3-methyl-2-oxobutanoate: step 2/4. Catalyzes the isomerization between 2-isopropylmalate and 3-isopropylmalate, via the formation of 2-isopropylmaleate. The sequence is that of 3-isopropylmalate dehydratase large subunit from Desulfosudis oleivorans (strain DSM 6200 / JCM 39069 / Hxd3) (Desulfococcus oleovorans).